The primary structure comprises 721 residues: Ribonucleoside-diphosphate reductase subunit alpha (721 aa).

Residues Thr-168, 184–185 (SC), Gly-213, 393–397 (NLCSE), and 595–599 (PTGSI) each bind substrate. Cys-185 and Cys-422 are joined by a disulfide. Residue Asn-393 is the Proton acceptor of the active site. Catalysis depends on Cys-395, which acts as the Cysteine radical intermediate. Glu-397 acts as the Proton acceptor in catalysis.

Belongs to the ribonucleoside diphosphate reductase large chain family. As to quaternary structure, tetramer of two alpha and two beta subunits.

The enzyme catalyses a 2'-deoxyribonucleoside 5'-diphosphate + [thioredoxin]-disulfide + H2O = a ribonucleoside 5'-diphosphate + [thioredoxin]-dithiol. Under complex allosteric control mediated by deoxynucleoside triphosphates and ATP binding. The type of nucleotide bound at the specificity site determines substrate preference. It seems probable that ATP makes the enzyme reduce CDP and UDP, dGTP favors ADP reduction and dTTP favors GDP reduction. In terms of biological role, provides the precursors necessary for DNA synthesis. Catalyzes the biosynthesis of deoxyribonucleotides from the corresponding ribonucleotides. This chain is Ribonucleoside-diphosphate reductase subunit alpha (nrdE), found in Mycobacterium leprae (strain TN).